Consider the following 133-residue polypeptide: Nucleoside diphosphate kinase (133 aa).

6 residues coordinate ATP: Lys-9, Phe-57, Arg-85, Thr-91, Arg-102, and Asn-112. Catalysis depends on His-115, which acts as the Pros-phosphohistidine intermediate.

The protein belongs to the NDK family. Mg(2+) serves as cofactor.

Its subcellular location is the cytoplasm. It catalyses the reaction a 2'-deoxyribonucleoside 5'-diphosphate + ATP = a 2'-deoxyribonucleoside 5'-triphosphate + ADP. It carries out the reaction a ribonucleoside 5'-diphosphate + ATP = a ribonucleoside 5'-triphosphate + ADP. Its function is as follows. Major role in the synthesis of nucleoside triphosphates other than ATP. The ATP gamma phosphate is transferred to the NDP beta phosphate via a ping-pong mechanism, using a phosphorylated active-site intermediate. The protein is Nucleoside diphosphate kinase of Methanococcus maripaludis (strain DSM 14266 / JCM 13030 / NBRC 101832 / S2 / LL).